An 823-amino-acid chain; its full sequence is Leucine--tRNA ligase (823 aa).

Positions 41–51 (PYPSGTLHVGH) match the 'HIGH' region motif. A 'KMSKS' region motif is present at residues 580–584 (KMSKS). ATP is bound at residue K583.

It belongs to the class-I aminoacyl-tRNA synthetase family.

It localises to the cytoplasm. It carries out the reaction tRNA(Leu) + L-leucine + ATP = L-leucyl-tRNA(Leu) + AMP + diphosphate. In Thermosipho melanesiensis (strain DSM 12029 / CIP 104789 / BI429), this protein is Leucine--tRNA ligase.